Consider the following 209-residue polypeptide: N-acetyltransferase aca1 (209 aa).

The N-acetyltransferase domain maps to 26 to 202 (TNVKNKEELL…DAYIYQYHFP (177 aa)). Substrate is bound at residue Asn-118. A CoA-binding site is contributed by 128–133 (RSKGIG). 155-156 (NL) lines the substrate pocket.

The protein belongs to the acetyltransferase family. As to quaternary structure, homodimer.

The protein resides in the cytoplasm. Its subcellular location is the mitochondrion. The catalysed reaction is L-glutamate 5-semialdehyde + acetyl-CoA = N-acetyl-L-glutamate 5-semialdehyde + CoA + H(+). Functionally, N-acetyltransferase involved in oxidative stress resistance. Acetylates the toxic proline metabolism intermediate (S)-1-pyrroline-5-carboxylate (P5C), or more likely its spontaneously forming tautomer glutamate-5-semialdehyde (GSA) into N-acetyl-GSA for arginine synthesis in the mitochondria. P5C has been shown to increase the levels of reactive oxygen species (ROS) in the cell by inhibiting the function of the respiratory chain in the mitochondria. The enzyme is able to reduce intracellular ROS levels under P5C-induced oxidative stress and protects cells from damage by oxidative stress. Also acetylates and thereby detoxifies the proline analog azetidine-2-carboxylate (AZC), however it is unlikely that AZC is a natural substrate as it occurs only in plants belonging to the Lilaceae family. The protein is N-acetyltransferase aca1 of Schizosaccharomyces pombe (strain 972 / ATCC 24843) (Fission yeast).